A 414-amino-acid chain; its full sequence is 3-oxoacyl-[acyl-carrier-protein] synthase 2 (414 aa).

The region spanning 3-411 (KRRVVITGLG…GTNGTLVLSR (409 aa)) is the Ketosynthase family 3 (KS3) domain. Active-site for beta-ketoacyl synthase activity residues include Cys164, His304, and His341.

It belongs to the thiolase-like superfamily. Beta-ketoacyl-ACP synthases family. In terms of assembly, homodimer.

It carries out the reaction a fatty acyl-[ACP] + malonyl-[ACP] + H(+) = a 3-oxoacyl-[ACP] + holo-[ACP] + CO2. The enzyme catalyses (9Z)-hexadecenoyl-[ACP] + malonyl-[ACP] + H(+) = 3-oxo-(11Z)-octadecenoyl-[ACP] + holo-[ACP] + CO2. It functions in the pathway lipid metabolism; fatty acid biosynthesis. Involved in the type II fatty acid elongation cycle. Catalyzes the elongation of a wide range of acyl-ACP by the addition of two carbons from malonyl-ACP to an acyl acceptor. Can efficiently catalyze the conversion of palmitoleoyl-ACP (cis-hexadec-9-enoyl-ACP) to cis-vaccenoyl-ACP (cis-octadec-11-enoyl-ACP), an essential step in the thermal regulation of fatty acid composition. The protein is 3-oxoacyl-[acyl-carrier-protein] synthase 2 (fabF) of Coxiella burnetii (strain RSA 493 / Nine Mile phase I).